Consider the following 962-residue polypeptide: MHFILDPEDPGAPQASTEGKPKHRRLRGGVVMAAPPARPDHTRLLQICLLLGVLVEIRAEQILYSVFEEQEEGSVVGNIAKDLGLAPRELAERGVRIVSRGRTQLFALNPRSGTLVTAGRIDREELCDRSPNCVTNLEILLEDTVKILRVEVEIIDVNDNPPSFGTEQREIKVAENENPGARFPLPEAFDPDVGVNSLQGYQLNSNGYFSLDVQSGADGIKYPELVLERALDREEEAVHHLVLTAFDGGDPVRSGTARILIILVDTNDNAPVFTQPEYHVSVRENVPVGTRLLTVKATDPDEGANGDVTYSFRKVRDKISQLFQLNSLSGDITILGGLDYEDSGFYDIDVEAHDGPGLRARSKVLVTVLDENDNAPEVTVTSLTSSVQESSSPGTVIALFNVHDSDSGGNGLVTCSIPDNLPFTLEKTYGNYYRLLTHRTLDREEVSEYNITVTATDQGTPPLSTETHISLQVMDINDNPPTFPHASYSAYIPENNPRGASILSMTAQDPDSGDNARITYSLAEDTFQGAPLSSYVSINSNTGILYALCSFDYEQFRDLQLLMTASDSGDPPLSSNVSLSLFVLDQNDNVPEILYPTFPTDGSTGVELAPRSADSGYLVTKVVAVDRDSGQNAWLSYSLLKSSEPGLFAVGLHTGEVRTARALLDRDALKQRLVVVVQDHGQPPLSATVTLTVAVADSIPDVLADLGSLKPSADPDDSGLTLYLVVAVAAVSCVFLAFVTVLLALKLRRWHKSRLLHAEGSRLAGVPASHFVGVDGVRAFLQTYSHEVSLTADSRKSHLIFSQPSYADTLISRESCEKSEPLLITQDLLETKGDPNLQQAPPNTDWRFSQAQRPGTSGSQNGDDTGTWPNNQFDTEMLQAMILASASEAADGSSTLGGGAGTMGLSARYGPQFTLQHVPDYRQNVYIPGSNATLTNAAGKRDGKAPAGGNGNKKKSGKKEKK.

Residues 1–24 form a disordered region; the sequence is MHFILDPEDPGAPQASTEGKPKHR. An N-terminal signal peptide occupies residues 1–59; the sequence is MHFILDPEDPGAPQASTEGKPKHRRLRGGVVMAAPPARPDHTRLLQICLLLGVLVEIRA. Cadherin domains lie at 60–164, 165–273, 274–378, 379–483, 484–598, and 601–713; these read EQIL…PPSF, GTEQ…APVF, TQPE…APEV, TVTS…PPTF, PHAS…YPTF, and DGST…KPSA. At 60 to 723 the chain is on the extracellular side; the sequence is EQILYSVFEE…DPDDSGLTLY (664 aa). Residues Asn-450 and Asn-576 are each glycosylated (N-linked (GlcNAc...) asparagine). The helical transmembrane segment at 724–744 threads the bilayer; sequence LVVAVAAVSCVFLAFVTVLLA. Topologically, residues 745–962 are cytoplasmic; it reads LKLRRWHKSR…KKKSGKKEKK (218 aa). 2 disordered regions span residues 832-871 and 932-962; these read KGDP…WPNN and ATLT…KEKK. Over residues 836 to 871 the composition is skewed to polar residues; that stretch reads NLQQAPPNTDWRFSQAQRPGTSGSQNGDDTGTWPNN. Over residues 952–962 the composition is skewed to basic residues; sequence NKKKSGKKEKK.

Its subcellular location is the cell membrane. Functionally, potential calcium-dependent cell-adhesion protein. May be involved in the establishment and maintenance of specific neuronal connections in the brain. This Homo sapiens (Human) protein is Protocadherin gamma-A4 (PCDHGA4).